Consider the following 282-residue polypeptide: 4-hydroxybenzoate octaprenyltransferase (282 aa).

9 consecutive transmembrane segments (helical) span residues 17 to 37 (IGILLLWYPTAWALWMANQGF), 40 to 60 (IDLLMIFLLGTVFMRSAGCVI), 90 to 110 (AFILLFILLCASLLLLLKLPI), 113 to 133 (FYFAVISVLITFLYPFCKRFL), 135 to 155 (APQLILGLAFSMGIPMAFIAS), 163 to 183 (FIVLFLINFSWIIAYDTMYAM), 207 to 227 (LIIALLLIFLHSLWLVWAINK), 231 to 251 (WFFYLLWCTAAGILTYQLKLI), and 262 to 282 (AFLVSGYYGLVMWFAVGLALI).

The protein belongs to the UbiA prenyltransferase family. Mg(2+) serves as cofactor.

It localises to the cell inner membrane. It carries out the reaction all-trans-octaprenyl diphosphate + 4-hydroxybenzoate = 4-hydroxy-3-(all-trans-octaprenyl)benzoate + diphosphate. It participates in cofactor biosynthesis; ubiquinone biosynthesis. Functionally, catalyzes the prenylation of para-hydroxybenzoate (PHB) with an all-trans polyprenyl group. Mediates the second step in the final reaction sequence of ubiquinone-8 (UQ-8) biosynthesis, which is the condensation of the polyisoprenoid side chain with PHB, generating the first membrane-bound Q intermediate 3-octaprenyl-4-hydroxybenzoate. The chain is 4-hydroxybenzoate octaprenyltransferase from Legionella pneumophila subsp. pneumophila (strain Philadelphia 1 / ATCC 33152 / DSM 7513).